We begin with the raw amino-acid sequence, 444 residues long: N-succinylarginine dihydrolase (444 aa).

Substrate contacts are provided by residues 19–28 (SGLSVGNIAS), asparagine 110, and 137–138 (HR). Residue glutamate 174 is part of the active site. Position 214 (arginine 214) interacts with substrate. Histidine 250 is a catalytic residue. Aspartate 252 and asparagine 362 together coordinate substrate. Cysteine 368 serves as the catalytic Nucleophile.

Belongs to the succinylarginine dihydrolase family. Homodimer.

It catalyses the reaction N(2)-succinyl-L-arginine + 2 H2O + 2 H(+) = N(2)-succinyl-L-ornithine + 2 NH4(+) + CO2. The protein operates within amino-acid degradation; L-arginine degradation via AST pathway; L-glutamate and succinate from L-arginine: step 2/5. Catalyzes the hydrolysis of N(2)-succinylarginine into N(2)-succinylornithine, ammonia and CO(2). The chain is N-succinylarginine dihydrolase from Aliivibrio salmonicida (strain LFI1238) (Vibrio salmonicida (strain LFI1238)).